The chain runs to 382 residues: Alpha-methylacyl-CoA racemase (382 aa).

Residues Arg36 and 55 to 58 (LDLK) each bind substrate. Position 58 is an N6-acetyllysine (Lys58). An N6-acetyllysine; alternate modification is found at Lys87. N6-succinyllysine; alternate is present on Lys87. 121–126 (GHDINY) is a substrate binding site. His122 acts as the Proton acceptor in catalysis. The active-site Proton donor is Asp152. Lys268 is modified (N6-succinyllysine). The Microbody targeting signal motif lies at 380–382 (ASL).

The protein belongs to the CoA-transferase III family. Monomer.

The protein localises to the peroxisome. The protein resides in the mitochondrion. It catalyses the reaction a (2S)-2-methylacyl-CoA = a (2R)-2-methylacyl-CoA. The catalysed reaction is (25R)-3alpha,7alpha,12alpha-trihydroxy-5beta-cholestan-26-oyl-CoA = (25S)-3alpha,7alpha,12alpha-trihydroxy-5beta-cholestan-26-oyl-CoA. It carries out the reaction (2R,6)-dimethylheptanoyl-CoA = (2S,6)-dimethylheptanoyl-CoA. Its pathway is lipid metabolism; bile acid biosynthesis. It functions in the pathway lipid metabolism; fatty acid metabolism. Catalyzes the interconversion of (R)- and (S)-stereoisomers of alpha-methyl-branched-chain fatty acyl-CoA esters. Acts only on coenzyme A thioesters, not on free fatty acids, and accepts as substrates a wide range of alpha-methylacyl-CoAs, including pristanoyl-CoA, trihydroxycoprostanoyl-CoA (an intermediate in bile acid synthesis), and arylpropionic acids like the anti-inflammatory drug ibuprofen (2-(4-isobutylphenyl)propionic acid) but neither 3-methyl-branched nor linear-chain acyl-CoAs. The protein is Alpha-methylacyl-CoA racemase (AMACR) of Homo sapiens (Human).